Reading from the N-terminus, the 273-residue chain is Ribosomal RNA small subunit methyltransferase A (273 aa).

S-adenosyl-L-methionine is bound by residues histidine 10, leucine 12, glycine 37, glutamate 58, aspartate 83, and asparagine 108.

It belongs to the class I-like SAM-binding methyltransferase superfamily. rRNA adenine N(6)-methyltransferase family. RsmA subfamily.

Its subcellular location is the cytoplasm. The catalysed reaction is adenosine(1518)/adenosine(1519) in 16S rRNA + 4 S-adenosyl-L-methionine = N(6)-dimethyladenosine(1518)/N(6)-dimethyladenosine(1519) in 16S rRNA + 4 S-adenosyl-L-homocysteine + 4 H(+). Specifically dimethylates two adjacent adenosines (A1518 and A1519) in the loop of a conserved hairpin near the 3'-end of 16S rRNA in the 30S particle. May play a critical role in biogenesis of 30S subunits. This is Ribosomal RNA small subunit methyltransferase A from Picosynechococcus sp. (strain ATCC 27264 / PCC 7002 / PR-6) (Agmenellum quadruplicatum).